Consider the following 145-residue polypeptide: 3-hydroxyacyl-[acyl-carrier-protein] dehydratase FabZ (145 aa).

Residue H51 is part of the active site.

Belongs to the thioester dehydratase family. FabZ subfamily.

It is found in the cytoplasm. It carries out the reaction a (3R)-hydroxyacyl-[ACP] = a (2E)-enoyl-[ACP] + H2O. Functionally, involved in unsaturated fatty acids biosynthesis. Catalyzes the dehydration of short chain beta-hydroxyacyl-ACPs and long chain saturated and unsaturated beta-hydroxyacyl-ACPs. The chain is 3-hydroxyacyl-[acyl-carrier-protein] dehydratase FabZ from Macrococcus caseolyticus (strain JCSC5402) (Macrococcoides caseolyticum).